Here is a 315-residue protein sequence, read N- to C-terminus: Probable cell division protein WhiA (315 aa).

The segment at residues 280 to 313 is a DNA-binding region (H-T-H motif); that stretch reads SLKELGEMLDPPVGKSGINHRLRKIEKIAEELRT.

The protein belongs to the WhiA family.

Functionally, involved in cell division and chromosome segregation. The sequence is that of Probable cell division protein WhiA from Clostridium beijerinckii (strain ATCC 51743 / NCIMB 8052) (Clostridium acetobutylicum).